A 578-amino-acid polypeptide reads, in one-letter code: Protein O-linked-mannose beta-1,4-N-acetylglucosaminyltransferase 2 (578 aa).

Residues 1-4 are Cytoplasmic-facing; sequence MNIS. The helical; Signal-anchor for type II membrane protein transmembrane segment at 5-25 threads the bilayer; it reads AVFSALLVSIMAAVLWKHVKL. The Lumenal portion of the chain corresponds to 26–578; that stretch reads LDQFYVIEEE…PFAEVLVCST (553 aa). N-linked (GlcNAc...) asparagine glycans are attached at residues N98, N275, N335, N451, N541, and N563. Positions 484–578 constitute a Fibronectin type-III domain; that stretch reads RESKCQASAQ…PFAEVLVCST (95 aa).

This sequence belongs to the glycosyltransferase 61 family.

It localises to the endoplasmic reticulum membrane. It carries out the reaction 3-O-(alpha-D-mannosyl)-L-threonyl-[protein] + UDP-N-acetyl-alpha-D-glucosamine = 3-O-(N-acetyl-beta-D-glucosaminyl-(1-&gt;4)-alpha-D-mannosyl)-L-threonyl-[protein] + UDP + H(+). Its pathway is protein modification; protein glycosylation. Functionally, O-linked mannose beta-1,4-N-acetylglucosaminyltransferase that transfers UDP-N-acetyl-D-glucosamine to the 4-position of the mannose to generate N-acetyl-D-glucosamine-beta-1,4-O-D-mannosylprotein. Involved in the biosynthesis of the phosphorylated O-mannosyl trisaccharide (N-acetylgalactosamine-beta-3-N-acetylglucosamine-beta-4-(phosphate-6-)mannose), a carbohydrate structure present in alpha-dystroglycan (DAG1), which is required for binding laminin G-like domain-containing extracellular proteins with high affinity. In Xenopus laevis (African clawed frog), this protein is Protein O-linked-mannose beta-1,4-N-acetylglucosaminyltransferase 2 (pomgnt2).